We begin with the raw amino-acid sequence, 409 residues long: Galactosylgalactosylxylosylprotein 3-beta-glucuronosyltransferase S (409 aa).

Residues 1–45 (MSSARLLESQTSDEDNEDIERRPHQSHSRSCSNNTTPTHPPHPMV) form a disordered region. The Cytoplasmic segment spans residues 1–53 (MSSARLLESQTSDEDNEDIERRPHQSHSRSCSNNTTPTHPPHPMVRKGGVARR). The residue at position 9 (Ser9) is a Phosphoserine. Position 11 is a phosphothreonine (Thr11). 2 positions are modified to phosphoserine: Ser12 and Ser32. Residues 54 to 73 (ICLIGGALFLLLVALCYLTL) form a helical; Signal-anchor for type II membrane protein membrane-spanning segment. Topologically, residues 74–409 (SGDTRLGGSE…RENPHSKILS (336 aa)) are lumenal. 2 N-linked (GlcNAc...) asparagine glycosylation sites follow: Asn102 and Asn223. Asp235 provides a ligand contact to Mn(2+). Glu318 acts as the Proton acceptor in catalysis. Asn338 carries an N-linked (GlcNAc...) asparagine glycan. Residues 389–409 (EGRNALISKNGRENPHSKILS) are disordered. Over residues 398–409 (NGRENPHSKILS) the composition is skewed to basic and acidic residues.

Belongs to the glycosyltransferase 43 family. Requires Mn(2+) as cofactor.

Its subcellular location is the golgi apparatus membrane. The enzyme catalyses 3-O-(beta-D-galactosyl-(1-&gt;3)-beta-D-galactosyl-(1-&gt;4)-beta-D-xylosyl)-L-seryl-[protein] + UDP-alpha-D-glucuronate = 3-O-(beta-D-GlcA-(1-&gt;3)-beta-D-Gal-(1-&gt;3)-beta-D-Gal-(1-&gt;4)-beta-D-Xyl)-L-seryl-[protein] + UDP + H(+). It participates in protein modification; protein glycosylation. Functionally, involved in the biosynthesis of L2/HNK-1 carbohydrate epitope on both glycolipids and glycoproteins. Enzyme has a broad specificity. This chain is Galactosylgalactosylxylosylprotein 3-beta-glucuronosyltransferase S (GlcAT-S), found in Drosophila melanogaster (Fruit fly).